A 220-amino-acid polypeptide reads, in one-letter code: MTQDELKKAVGWAALEYVKPGTIVGVGTGSTAAHFIDALASIKGQIEGAVSSSDASTAKLKSYGIQVFDCNEVDELDIYVDGADEINSQMQMIKGGGAALTREKIIAAIARKFICIADASKQVDVLGKFPLPVEVIPMARSYVARELVKLGGLPEYRQNVLTDNGNVILDVHNLTILDAIALENKINNIAGVVTVGLFANRGADVALIGTADGVKTVELK.

Residues 28 to 31, 81 to 84, and 94 to 97 each bind substrate; these read TGST, DGAD, and KGGG. The active-site Proton acceptor is the E103. Residue K121 coordinates substrate.

It belongs to the ribose 5-phosphate isomerase family. In terms of assembly, homodimer.

The catalysed reaction is aldehydo-D-ribose 5-phosphate = D-ribulose 5-phosphate. The protein operates within carbohydrate degradation; pentose phosphate pathway; D-ribose 5-phosphate from D-ribulose 5-phosphate (non-oxidative stage): step 1/1. In terms of biological role, catalyzes the reversible conversion of ribose-5-phosphate to ribulose 5-phosphate. The protein is Ribose-5-phosphate isomerase A of Yersinia enterocolitica serotype O:8 / biotype 1B (strain NCTC 13174 / 8081).